Consider the following 240-residue polypeptide: Nicotinamide riboside kinase (240 aa).

Glycine 13–threonine 21 is an ATP binding site. Positions 20 and 39 each coordinate Mg(2+). Aspartate 39 serves as the catalytic Proton acceptor. Residues aspartate 39–tyrosine 42 and tryptophan 59–aspartate 60 each bind substrate. Residue arginine 158 participates in ATP binding. Residues arginine 159 and glycine 164–tyrosine 165 each bind substrate. Residues arginine 162 to glycine 164 and lysine 208 to lysine 210 contribute to the ATP site.

Belongs to the uridine kinase family. NRK subfamily.

It catalyses the reaction beta-nicotinamide D-riboside + ATP = beta-nicotinamide D-ribonucleotide + ADP + H(+). The catalysed reaction is beta-D-ribosylnicotinate + ATP = nicotinate beta-D-ribonucleotide + ADP + H(+). It participates in cofactor biosynthesis; NAD(+) biosynthesis. In terms of biological role, catalyzes the phosphorylation of nicotinamide riboside (NR) and nicotinic acid riboside (NaR) to form nicotinamide mononucleotide (NMN) and nicotinic acid mononucleotide (NaMN). In Saccharomyces cerevisiae (strain ATCC 204508 / S288c) (Baker's yeast), this protein is Nicotinamide riboside kinase (NRK1).